The following is a 176-amino-acid chain: Large ribosomal subunit protein uL10 (176 aa).

Belongs to the universal ribosomal protein uL10 family. Part of the ribosomal stalk of the 50S ribosomal subunit. The N-terminus interacts with L11 and the large rRNA to form the base of the stalk. The C-terminus forms an elongated spine to which L12 dimers bind in a sequential fashion forming a multimeric L10(L12)X complex.

Functionally, forms part of the ribosomal stalk, playing a central role in the interaction of the ribosome with GTP-bound translation factors. This is Large ribosomal subunit protein uL10 from Nocardia farcinica (strain IFM 10152).